A 99-amino-acid polypeptide reads, in one-letter code: Large ribosomal subunit protein bL21 (99 aa).

It belongs to the bacterial ribosomal protein bL21 family. Part of the 50S ribosomal subunit. Contacts protein L20.

Its function is as follows. This protein binds to 23S rRNA in the presence of protein L20. This chain is Large ribosomal subunit protein bL21, found in Mesomycoplasma hyopneumoniae (strain 232) (Mycoplasma hyopneumoniae).